A 305-amino-acid chain; its full sequence is HTH-type transcriptional activator BauR (305 aa).

The HTH lysR-type domain occupies 15 to 72 (FDIRLLRIFKTIVECGSFSAAESTLGLSRSAISLHMGDLEKRLGMRLCQRGRAGFALT).

It belongs to the LysR transcriptional regulatory family.

In terms of biological role, involved in the degradation of beta-alanine. BauR activates the transcription of the bauABCD operon. The protein is HTH-type transcriptional activator BauR (bauR) of Pseudomonas aeruginosa (strain ATCC 15692 / DSM 22644 / CIP 104116 / JCM 14847 / LMG 12228 / 1C / PRS 101 / PAO1).